We begin with the raw amino-acid sequence, 131 residues long: MGRHKATIEGLVMKERYYSHRAPGTERWITQPVCKVTRTEPIFEGYIDIEPIEIGGKVYIPGLNEYVIVTDRQRNIHNEWTYQTDRVIKTIIDEKSLKECEEHNNKKAKNNDTQNQRQIKTSWWQRLTKKD.

The disordered stretch occupies residues 102–131; the sequence is EHNNKKAKNNDTQNQRQIKTSWWQRLTKKD. Over residues 111 to 125 the composition is skewed to polar residues; that stretch reads NDTQNQRQIKTSWWQ.

In Bacillus subtilis (strain 168), this protein is SPbeta prophage-derived uncharacterized protein YosD (yosD).